The sequence spans 216 residues: SHKVSGGLHGVGVSVVNALSSKLELTVQRAGQIHEQEYQHGVPQYPLRVVGQTERTGTKVRFWPSAETFSQTIFNVDILARRLRELSFLNAGVRIVLCDERINLEHVFDYEGGLSEKSALDIAGLPGKLADCQEKDPALSELFLVEGDSAGGSAKQGRNRKMQAILPLKGKILNVERARFDRMISSAEVGTLITALGCGIGREEYNPDKLRYHKIV.

The region spanning 140–216 (SELFLVEGDS…PDKLRYHKIV (77 aa)) is the Toprim domain.

It belongs to the type II topoisomerase GyrB family. As to quaternary structure, heterotetramer, composed of two GyrA and two GyrB chains. In the heterotetramer, GyrA contains the active site tyrosine that forms a transient covalent intermediate with DNA, while GyrB binds cofactors and catalyzes ATP hydrolysis.

The protein localises to the cytoplasm. The catalysed reaction is ATP-dependent breakage, passage and rejoining of double-stranded DNA.. In terms of biological role, a type II topoisomerase that negatively supercoils closed circular double-stranded (ds) DNA in an ATP-dependent manner to modulate DNA topology and maintain chromosomes in an underwound state. Negative supercoiling favors strand separation, and DNA replication, transcription, recombination and repair, all of which involve strand separation. Also able to catalyze the interconversion of other topological isomers of dsDNA rings, including catenanes and knotted rings. Type II topoisomerases break and join 2 DNA strands simultaneously in an ATP-dependent manner. This chain is DNA gyrase subunit B (gyrB), found in Acinetobacter sp. (strain SEIP 12.81).